The following is a 310-amino-acid chain: Methionyl-tRNA formyltransferase (310 aa).

Residue 109–112 participates in (6S)-5,6,7,8-tetrahydrofolate binding; that stretch reads SLLP.

Belongs to the Fmt family.

It carries out the reaction L-methionyl-tRNA(fMet) + (6R)-10-formyltetrahydrofolate = N-formyl-L-methionyl-tRNA(fMet) + (6S)-5,6,7,8-tetrahydrofolate + H(+). Its function is as follows. Attaches a formyl group to the free amino group of methionyl-tRNA(fMet). The formyl group appears to play a dual role in the initiator identity of N-formylmethionyl-tRNA by promoting its recognition by IF2 and preventing the misappropriation of this tRNA by the elongation apparatus. The sequence is that of Methionyl-tRNA formyltransferase from Agathobacter rectalis (strain ATCC 33656 / DSM 3377 / JCM 17463 / KCTC 5835 / VPI 0990) (Eubacterium rectale).